The following is an 86-amino-acid chain: uncharacterized protein (86 aa).

This is an uncharacterized protein from Beak and feather disease virus (BFDV).